The chain runs to 647 residues: 2',3'-cyclic-nucleotide 2'-phosphodiesterase/3'-nucleotidase (647 aa).

The first 19 residues, 1–19 (MIKFSATLLATLIAASVNA), serve as a signal peptide directing secretion. The a divalent metal cation site is built by Asp-31, His-33, Asp-76, Asn-116, His-225, His-257, and His-259. Residues Tyr-440 and 544–550 (YRAYGGK) contribute to the substrate site.

This sequence belongs to the 5'-nucleotidase family. It depends on a divalent metal cation as a cofactor.

It localises to the periplasm. The catalysed reaction is a nucleoside 2',3'-cyclic phosphate + H2O = a nucleoside 3'-phosphate + H(+). It carries out the reaction a ribonucleoside 3'-phosphate + H2O = a ribonucleoside + phosphate. Functionally, this bifunctional enzyme catalyzes two consecutive reactions during ribonucleic acid degradation. Converts a 2',3'-cyclic nucleotide to a 3'-nucleotide and then the 3'-nucleotide to the corresponding nucleoside and phosphate. The sequence is that of 2',3'-cyclic-nucleotide 2'-phosphodiesterase/3'-nucleotidase (cpdB) from Salmonella typhimurium (strain LT2 / SGSC1412 / ATCC 700720).